We begin with the raw amino-acid sequence, 428 residues long: 3-phosphoshikimate 1-carboxyvinyltransferase (428 aa).

Residues lysine 21, serine 22, and arginine 26 each coordinate 3-phosphoshikimate. Lysine 21 contacts phosphoenolpyruvate. Phosphoenolpyruvate contacts are provided by glycine 91 and arginine 119. 4 residues coordinate 3-phosphoshikimate: serine 164, glutamine 166, aspartate 313, and lysine 340. Glutamine 166 serves as a coordination point for phosphoenolpyruvate. The Proton acceptor role is filled by aspartate 313. Phosphoenolpyruvate-binding residues include arginine 344 and arginine 386.

It belongs to the EPSP synthase family. In terms of assembly, monomer.

It localises to the cytoplasm. It carries out the reaction 3-phosphoshikimate + phosphoenolpyruvate = 5-O-(1-carboxyvinyl)-3-phosphoshikimate + phosphate. It participates in metabolic intermediate biosynthesis; chorismate biosynthesis; chorismate from D-erythrose 4-phosphate and phosphoenolpyruvate: step 6/7. Functionally, catalyzes the transfer of the enolpyruvyl moiety of phosphoenolpyruvate (PEP) to the 5-hydroxyl of shikimate-3-phosphate (S3P) to produce enolpyruvyl shikimate-3-phosphate and inorganic phosphate. The protein is 3-phosphoshikimate 1-carboxyvinyltransferase of Campylobacter jejuni subsp. jejuni serotype O:23/36 (strain 81-176).